Here is a 333-residue protein sequence, read N- to C-terminus: Biotin synthase (333 aa).

A Radical SAM core domain is found at 47 to 276 (YYGKKVKLNM…TKEIRISGGR (230 aa)). Residues Cys65, Cys69, and Cys72 each contribute to the [4Fe-4S] cluster site. Residues Cys109, Cys141, Cys201, and Arg271 each contribute to the [2Fe-2S] cluster site.

This sequence belongs to the radical SAM superfamily. Biotin synthase family. As to quaternary structure, homodimer. [4Fe-4S] cluster serves as cofactor. It depends on [2Fe-2S] cluster as a cofactor.

The catalysed reaction is (4R,5S)-dethiobiotin + (sulfur carrier)-SH + 2 reduced [2Fe-2S]-[ferredoxin] + 2 S-adenosyl-L-methionine = (sulfur carrier)-H + biotin + 2 5'-deoxyadenosine + 2 L-methionine + 2 oxidized [2Fe-2S]-[ferredoxin]. The protein operates within cofactor biosynthesis; biotin biosynthesis; biotin from 7,8-diaminononanoate: step 2/2. Catalyzes the conversion of dethiobiotin (DTB) to biotin by the insertion of a sulfur atom into dethiobiotin via a radical-based mechanism. The chain is Biotin synthase from Bacillus licheniformis (strain ATCC 14580 / DSM 13 / JCM 2505 / CCUG 7422 / NBRC 12200 / NCIMB 9375 / NCTC 10341 / NRRL NRS-1264 / Gibson 46).